Consider the following 120-residue polypeptide: MKHSNRLTRREEYSRVLASGGTYIGQLAVMKAVPNSLELSRVGFIVSKKVGGAVERNRAKRILRESLRTTGLKQGWDIVFIARAKAATVKCAEMERVVKHLLGKAQILSKANEKTSSKAD.

This sequence belongs to the RnpA family. Consists of a catalytic RNA component (M1 or rnpB) and a protein subunit.

The catalysed reaction is Endonucleolytic cleavage of RNA, removing 5'-extranucleotides from tRNA precursor.. RNaseP catalyzes the removal of the 5'-leader sequence from pre-tRNA to produce the mature 5'-terminus. It can also cleave other RNA substrates such as 4.5S RNA. The protein component plays an auxiliary but essential role in vivo by binding to the 5'-leader sequence and broadening the substrate specificity of the ribozyme. The sequence is that of Ribonuclease P protein component from Dehalococcoides mccartyi (strain ATCC BAA-2266 / KCTC 15142 / 195) (Dehalococcoides ethenogenes (strain 195)).